The primary structure comprises 282 residues: MTKLHKYLPQRTLSKIVGWLATREWGLLTQWAIRLFIRHYGINMQEAQYPDIGHYPSFNAFFTRYLKRELRPVVEEPRAIASPVDGIISEMGQIKGENLIQAKNHHYTITALLGEDPSRASQFLDGDFFTAYLAPKNYHRIHMPLDGRLIEMIHIPGKLFSVNPASVQTVPRLFARNERAVCLFETENGLMAVILVGAMLVGSINTVWHGTVVPTAEGIAVHNYREKNIKFKRGEEIGHFKMGSTVILLFPKNTIQWNPNCQPKGTICYGENIGTVSLIEVA.

Active-site charge relay system; for autoendoproteolytic cleavage activity residues include Asp85, His142, and Ser244. Catalysis depends on Ser244, which acts as the Schiff-base intermediate with substrate; via pyruvic acid; for decarboxylase activity. Ser244 is subject to Pyruvic acid (Ser); by autocatalysis.

This sequence belongs to the phosphatidylserine decarboxylase family. PSD-B subfamily. Prokaryotic type I sub-subfamily. In terms of assembly, heterodimer of a large membrane-associated beta subunit and a small pyruvoyl-containing alpha subunit. It depends on pyruvate as a cofactor. Is synthesized initially as an inactive proenzyme. Formation of the active enzyme involves a self-maturation process in which the active site pyruvoyl group is generated from an internal serine residue via an autocatalytic post-translational modification. Two non-identical subunits are generated from the proenzyme in this reaction, and the pyruvate is formed at the N-terminus of the alpha chain, which is derived from the carboxyl end of the proenzyme. The autoendoproteolytic cleavage occurs by a canonical serine protease mechanism, in which the side chain hydroxyl group of the serine supplies its oxygen atom to form the C-terminus of the beta chain, while the remainder of the serine residue undergoes an oxidative deamination to produce ammonia and the pyruvoyl prosthetic group on the alpha chain. During this reaction, the Ser that is part of the protease active site of the proenzyme becomes the pyruvoyl prosthetic group, which constitutes an essential element of the active site of the mature decarboxylase.

The protein localises to the cell membrane. The catalysed reaction is a 1,2-diacyl-sn-glycero-3-phospho-L-serine + H(+) = a 1,2-diacyl-sn-glycero-3-phosphoethanolamine + CO2. It participates in phospholipid metabolism; phosphatidylethanolamine biosynthesis; phosphatidylethanolamine from CDP-diacylglycerol: step 2/2. In terms of biological role, catalyzes the formation of phosphatidylethanolamine (PtdEtn) from phosphatidylserine (PtdSer). The sequence is that of Phosphatidylserine decarboxylase proenzyme from Coxiella burnetii (strain CbuG_Q212) (Coxiella burnetii (strain Q212)).